A 103-amino-acid chain; its full sequence is Histone H4 (103 aa).

Residues 1–14 are compositionally biased toward gly residues; sequence MTGRGKGGKGLGKG. A disordered region spans residues 1 to 20; sequence MTGRGKGGKGLGKGGAKRHR. Residues Lys6 and Lys13 each carry the N6-acetyl-N6-methyllysine; alternate modification. A DNA-binding region spans residues 17–21; sequence KRHRK.

This sequence belongs to the histone H4 family. In terms of assembly, the nucleosome is a histone octamer containing two molecules each of H2A, H2B, H3 and H4 assembled in one H3-H4 heterotetramer and two H2A-H2B heterodimers. The octamer wraps approximately 147 bp of DNA.

The protein localises to the nucleus. It is found in the chromosome. Its function is as follows. Core component of nucleosome. Nucleosomes wrap and compact DNA into chromatin, limiting DNA accessibility to the cellular machineries which require DNA as a template. Histones thereby play a central role in transcription regulation, DNA repair, DNA replication and chromosomal stability. DNA accessibility is regulated via a complex set of post-translational modifications of histones, also called histone code, and nucleosome remodeling. This Trichogramma cacaeciae (Moth egg parasite) protein is Histone H4.